The sequence spans 258 residues: UPF0246 protein YaaA (258 aa).

The protein belongs to the UPF0246 family.

This chain is UPF0246 protein YaaA, found in Shigella flexneri serotype 5b (strain 8401).